Reading from the N-terminus, the 727-residue chain is Iron-sulfur clusters transporter atm1, mitochondrial (727 aa).

The segment at 46–97 (NSPLRKDASKEPALASNSKTTNPIPTQASASVNPPKDARNATTAKKDLLSET) is disordered. A compositionally biased stretch (polar residues) spans 60–77 (ASNSKTTNPIPTQASASV). A compositionally biased stretch (basic and acidic residues) spans 81 to 94 (KDARNATTAKKDLL). Residues 131–152 (VGTALSLLVGAKILNVEVPFYF) traverse the membrane as a helical segment. One can recognise an ABC transmembrane type-1 domain in the interval 131–421 (VGTALSLLVG…LGSVYRELRQ (291 aa)). Topologically, residues 153-175 (KSIVDSMNIDFATVGGTAYTVAG) are mitochondrial intermembrane. Residues 176-199 (SMIIAYGVTRIGATLFQELRNAVF) traverse the membrane as a helical segment. The Mitochondrial matrix portion of the chain corresponds to 200–248 (ASVAQKAIRRVARNVFEHLLRLDLNFHLSRQTGGLTRAIDRGTKGISFL). A helical membrane pass occupies residues 249–272 (LTSMVFHVVPTALEISLVCGILTY). Position 273 (glutamine 273) is a topological domain, mitochondrial intermembrane. Residues 274 to 294 (YGFQFAAITAATMVAYTAFTI) traverse the membrane as a helical segment. At 295-360 (TTTAWRTKFR…ASIKVTTSLA (66 aa)) the chain is on the mitochondrial matrix side. Glutathione is bound by residues 300–304 (RTKFR) and 363–366 (NSGQ). Residues 361–379 (FLNSGQNMIFSSALAAMMY) form a helical membrane-spanning segment. Residues 380-394 (LAANGVANGNLTVGD) lie on the Mitochondrial intermembrane side of the membrane. A helical membrane pass occupies residues 395 to 416 (LVMVNQLVFQLSVPLNFLGSVY). Position 413 (glycine 413) interacts with glutathione. Topologically, residues 417–727 (RELRQSLLDM…DMAPGPKAQQ (311 aa)) are mitochondrial matrix. Residues 456–692 (IRFENVTFGY…NGIYAELWNA (237 aa)) enclose the ABC transporter domain. ATP-binding positions include tyrosine 465 and 489-500 (GPSGCGKSTILR). Over residues 702-719 (EFERETERDDVESKERDM) the composition is skewed to basic and acidic residues. The tract at residues 702–727 (EFERETERDDVESKERDMAPGPKAQQ) is disordered.

The protein belongs to the ABC transporter superfamily. ABCB family. Heavy Metal importer (TC 3.A.1.210) subfamily. Homodimer.

Its subcellular location is the mitochondrion inner membrane. In terms of biological role, performs an essential function in the generation of cytoplasmic iron-sulfur proteins by mediating the ATP-dependent export of Fe/S cluster precursors synthesized by nfs1 and other mitochondrial proteins. Hydrolyzes ATP. Binds glutathione and may function by transporting a glutathione-conjugated iron-sulfur compound. This chain is Iron-sulfur clusters transporter atm1, mitochondrial, found in Aspergillus fumigatus (strain ATCC MYA-4609 / CBS 101355 / FGSC A1100 / Af293) (Neosartorya fumigata).